Reading from the N-terminus, the 394-residue chain is Large ribosomal subunit protein mL44 (394 aa).

Residues 1–21 (MFRHVAQNLGSRNTSIQSYRL) constitute a mitochondrion transit peptide.

Belongs to the ribonuclease III family. Mitochondrion-specific ribosomal protein mL44 subfamily. As to quaternary structure, component of the mitochondrial large ribosomal subunit (mt-LSU).

Its subcellular location is the mitochondrion. Functionally, component of the mitochondrial ribosome. May have a function in the assembly/stability of nascent mitochondrial polypeptides exiting the ribosome. This chain is Large ribosomal subunit protein mL44, found in Caenorhabditis elegans.